Reading from the N-terminus, the 387-residue chain is Protein WHAT'S THIS FACTOR 9, mitochondrial (387 aa).

The N-terminal 24 residues, 1–24, are a transit peptide targeting the mitochondrion; sequence MLSIRRHAKTVASSCTNLTQKRTY. The PORR domain maps to 32-358; the sequence is KRDPYFDNIE…KKYIQLMKNS (327 aa).

It is found in the mitochondrion. Its function is as follows. RNA-binding protein involved in group II intron splicing. Binds specific group II introns and promotes their splicing (e.g. rpl2 and ccmFC). In Arabidopsis thaliana (Mouse-ear cress), this protein is Protein WHAT'S THIS FACTOR 9, mitochondrial.